The chain runs to 697 residues: Trishanku (697 aa).

The disordered stretch occupies residues 1–94; that stretch reads MEIEPVVRIS…NNNSNSNGTD (94 aa). Residues 12–47 show a composition bias toward low complexity; it reads NGNNNQNNNNNNNNNTNNNSNNNNNNNNSSNINSTN. The segment covering 58 to 72 has biased composition (polar residues); the sequence is KMISNINNQKSPNPL. The segment covering 73–91 has biased composition (low complexity); that stretch reads NSSVDDNNNTNNNNNSNSN. The BTB domain occupies 122-189; it reads SDVIFKVGDR…ICIGILDLDY (68 aa). The tract at residues 311-455 is disordered; the sequence is IQQQQQQQQQ…DSANDDYEYS (145 aa). Low complexity predominate over residues 312–331; it reads QQQQQQQQQQLQSANGASGK. A compositionally biased stretch (basic residues) spans 332–344; the sequence is SHGKRSSSSHLKK. Positions 353–363 are enriched in low complexity; that stretch reads GSCSSRCSSRR. Residues 416 to 453 are compositionally biased toward acidic residues; it reads DDFENDSEDGDDDDEDDDEDDDFTDDDDKDDSANDDYE.

Expressed strongly in presumptive spore (prespore or psp) cells during the late G2 phase of cell cycle. Present at a low level in vegetative cells.

Its function is as follows. Required for normal morphogenesis and cell-type stability. This Dictyostelium discoideum (Social amoeba) protein is Trishanku (triA).